The chain runs to 88 residues: Large ribosomal subunit protein eL31 (88 aa).

Belongs to the eukaryotic ribosomal protein eL31 family.

The chain is Large ribosomal subunit protein eL31 (rpl31e) from Archaeoglobus fulgidus (strain ATCC 49558 / DSM 4304 / JCM 9628 / NBRC 100126 / VC-16).